Consider the following 134-residue polypeptide: ATP synthase epsilon chain (134 aa).

Belongs to the ATPase epsilon chain family. F-type ATPases have 2 components, CF(1) - the catalytic core - and CF(0) - the membrane proton channel. CF(1) has five subunits: alpha(3), beta(3), gamma(1), delta(1), epsilon(1). CF(0) has three main subunits: a, b and c.

It is found in the cell membrane. Functionally, produces ATP from ADP in the presence of a proton gradient across the membrane. This chain is ATP synthase epsilon chain, found in Clostridium botulinum (strain Eklund 17B / Type B).